Here is a 244-residue protein sequence, read N- to C-terminus: Capsid protein (244 aa).

The Bipartite nuclear localization signal motif lies at 1–24 (MSTSKRKRGDDANWSKRVTKKKPS). A disordered region spans residues 1–39 (MSTSKRKRGDDANWSKRVTKKKPSSAGLKRAGSKADRPS).

It belongs to the geminiviridae capsid protein family. As to quaternary structure, homomultimer. Interacts with the movement protein. Binds to single-stranded and double-stranded viral DNA.

Its subcellular location is the virion. It localises to the host nucleus. Encapsidates the viral genome into characteristic twinned ('geminate') particles. Binds the genomic viral ssDNA and shuttles it into and out of the cell nucleus. Plays a role in protection of the genome from degradation, virus acquisition and transmission by insect vectors, infectivity, and systemic movement. The CP of monopartite geminiviruses is absolutely essential for virus movement. The protein is Capsid protein of Maize streak virus genotype A (isolate Kenya) (MSV).